Reading from the N-terminus, the 278-residue chain is 3-methyl-2-oxobutanoate hydroxymethyltransferase (278 aa).

Mg(2+) is bound by residues Asp-49 and Asp-88. 3-methyl-2-oxobutanoate is bound by residues 49-50 (DS), Asp-88, and Lys-118. Residue Glu-120 participates in Mg(2+) binding. Glu-186 serves as the catalytic Proton acceptor.

Belongs to the PanB family. Homodecamer; pentamer of dimers. Mg(2+) serves as cofactor.

The protein resides in the cytoplasm. The catalysed reaction is 3-methyl-2-oxobutanoate + (6R)-5,10-methylene-5,6,7,8-tetrahydrofolate + H2O = 2-dehydropantoate + (6S)-5,6,7,8-tetrahydrofolate. It functions in the pathway cofactor biosynthesis; (R)-pantothenate biosynthesis; (R)-pantoate from 3-methyl-2-oxobutanoate: step 1/2. Its function is as follows. Catalyzes the reversible reaction in which hydroxymethyl group from 5,10-methylenetetrahydrofolate is transferred onto alpha-ketoisovalerate to form ketopantoate. The chain is 3-methyl-2-oxobutanoate hydroxymethyltransferase from Bordetella parapertussis (strain 12822 / ATCC BAA-587 / NCTC 13253).